Here is a 330-residue protein sequence, read N- to C-terminus: HPr kinase/phosphorylase (330 aa).

Residues His-153 and Lys-174 contribute to the active site. 168-175 provides a ligand contact to ATP; that stretch reads GKSGLGKS. Residue Ser-175 coordinates Mg(2+). The active-site Proton acceptor; for phosphorylation activity. Proton donor; for dephosphorylation activity is Asp-192. The tract at residues 217-226 is important for the catalytic mechanism of both phosphorylation and dephosphorylation; the sequence is MEIRGLGVVD. Residue Glu-218 coordinates Mg(2+). Arg-259 is an active-site residue. The tract at residues 280-285 is important for the catalytic mechanism of dephosphorylation; sequence PIFPGK.

The protein belongs to the HPrK/P family. As to quaternary structure, homohexamer. The cofactor is Mg(2+).

The enzyme catalyses [HPr protein]-L-serine + ATP = [HPr protein]-O-phospho-L-serine + ADP + H(+). It catalyses the reaction [HPr protein]-O-phospho-L-serine + phosphate + H(+) = [HPr protein]-L-serine + diphosphate. Its function is as follows. Catalyzes the ATP- as well as the pyrophosphate-dependent phosphorylation of a specific serine residue in HPr, a phosphocarrier protein of the phosphoenolpyruvate-dependent sugar phosphotransferase system (PTS). HprK/P also catalyzes the pyrophosphate-producing, inorganic phosphate-dependent dephosphorylation (phosphorolysis) of seryl-phosphorylated HPr (P-Ser-HPr). This chain is HPr kinase/phosphorylase, found in Chlorobium limicola (strain DSM 245 / NBRC 103803 / 6330).